We begin with the raw amino-acid sequence, 491 residues long: Cytochrome P450 2F2 (491 aa).

Residue Cys436 coordinates heme.

This sequence belongs to the cytochrome P450 family. Requires heme as cofactor. Club cells in lung and liver.

It localises to the endoplasmic reticulum membrane. The protein localises to the microsome membrane. Functionally, involved in the regio- and stereoselective transformation of naphthalene to trans-1R-hydroxy-2R-glutathionyl-1,2-dihydronaphthalene in the presence of glutathione and glutathione S-transferases. It specifically catalyzes the production of a very reactive and potentially toxic intermediate, the 2R,2S arene oxide, that is associated with necrosis of the unciliated bronchiolar epithelial cells or club cells in lung. In Mus musculus (Mouse), this protein is Cytochrome P450 2F2 (Cyp2f2).